The sequence spans 841 residues: MAP7 domain-containing protein 1 (841 aa).

Disordered regions lie at residues 1-151 and 184-208; these read MESG…ERAK and EQRL…EKNK. The segment covering 22-52 has biased composition (pro residues); it reads PPEPRPSPEGDPSPPPPPMSALVPDTPPDTP. Phosphothreonine occurs at positions 47 and 51. A phosphoserine mark is found at Ser-70, Ser-86, and Ser-93. Thr-97 is modified (phosphothreonine). A phosphoserine mark is found at Ser-113 and Ser-116. Position 118 is a phosphothreonine (Thr-118). 2 positions are modified to phosphoserine: Ser-123 and Ser-125. Residues 128–222 adopt a coiled-coil conformation; sequence TKQEVKKAGE…AAIQRSVKKT (95 aa). The span at 130–151 shows a compositional bias: basic and acidic residues; the sequence is QEVKKAGERHKLAKERREERAK. A phosphoserine mark is found at Ser-254, Ser-273, Ser-313, Ser-366, and Ser-399. A disordered region spans residues 316 to 813; the sequence is TLPRNGRDQG…PSGDKSLSRT (498 aa). Residues 365–377 are compositionally biased toward polar residues; sequence ASASPLTPCSVTR. Residues 405 to 435 are compositionally biased toward basic and acidic residues; sequence RRPEASPVQKKEKKDKERENEKEKSALARER. The stretch at 412–441 forms a coiled coil; it reads VQKKEKKDKERENEKEKSALARERSLKKRQ. Phosphoserine occurs at positions 442, 446, 452, 454, and 460. Residues 460–473 show a composition bias toward low complexity; sequence SPKSKARPSSPSTS. A Glycyl lysine isopeptide (Lys-Gly) (interchain with G-Cter in SUMO2) cross-link involves residue Lys-462. Residues Ser-479 and Ser-496 each carry the phosphoserine modification. A compositionally biased stretch (pro residues) spans 479–497; sequence SPCPSPGPGHTLPPKPPSP. A compositionally biased stretch (basic and acidic residues) spans 523 to 539; it reads PEDKSQSKRRASNEKES. A phosphoserine mark is found at Ser-544, Ser-548, and Ser-552. Residues 544–561 show a composition bias toward pro residues; it reads SPAPSPAPSPTPAPPQKE. A Phosphothreonine modification is found at Thr-554. Residues 562-576 show a composition bias toward low complexity; the sequence is QPPAETPTDAAVLTS. Positions 577–586 are enriched in pro residues; it reads PPAPAPPVTP. Positions 593–721 form a coiled coil; that stretch reads TTDREEATRL…LEEIMKRTRK (129 aa). Residues 594–735 show a composition bias toward basic and acidic residues; that stretch reads TDREEATRLL…ETKQKQDSKE (142 aa). 2 positions are modified to phosphoserine: Ser-742 and Ser-753. Phosphothreonine occurs at positions 813 and 816. Ser-834 is subject to Phosphoserine.

This sequence belongs to the MAP7 family.

Its subcellular location is the cytoplasm. It localises to the cytoskeleton. The protein resides in the spindle. It is found in the microtubule organizing center. The protein localises to the centrosome. Its subcellular location is the midbody. In terms of biological role, microtubule-stabilizing protein involved in the control of cell motility and neurite outgrowth. Facilitate microtubule stabilization through the maintenance of acetylated stable microtubules. This is MAP7 domain-containing protein 1 (MAP7D1) from Homo sapiens (Human).